Reading from the N-terminus, the 450-residue chain is MSLYAPIAAIATAPGRGGIGVVRISGPDLAELAQRLFGRPLTPRHAHYLPFRAADGEVIDEGLAIYFRAPHSYTGEDVLELQGHGGPAVLRRILARCLQAGHDLGLRPAEPGEFTRRAFLNERLDLAQAEAVADLIDASSEAAARGAMASLSGEFSQRVNDLSDRIIHLRMLVEATLDFPEEEIDFLEKYQARPTLQALTHDLDTLIAQARQGVILREGLHVVLAGKPNVGKSSLLNALAGDDIAIVTPIAGTTRDKVVQEIHIDGVPLHIVDTAGLRDTDDAVESIGIERTWKEIERADLILHLQDVTQPPDHLDAQIVRRLPARTPVLNVFNKVDLLDAAFQGQPDSLAISARGGIGLDALRQRLLQLAGWNPGAESPWLARERHLHALQQAAQHLEIATEHAREDDRVLDLFAEELRLAHEALTGITGKFTSDDLLGEIFSSFCIGK.

(6S)-5-formyl-5,6,7,8-tetrahydrofolate contacts are provided by R23, E80, and R123. Residues 219–372 (GLHVVLAGKP…LRQRLLQLAG (154 aa)) enclose the TrmE-type G domain. Residue N229 participates in K(+) binding. Residues 229–234 (NVGKSS), 248–254 (TPIAGTT), 273–276 (DTAG), and 353–355 (SAR) contribute to the GTP site. S233 is a Mg(2+) binding site. Positions 248, 250, and 253 each coordinate K(+). A Mg(2+)-binding site is contributed by T254. K450 contributes to the (6S)-5-formyl-5,6,7,8-tetrahydrofolate binding site.

It belongs to the TRAFAC class TrmE-Era-EngA-EngB-Septin-like GTPase superfamily. TrmE GTPase family. In terms of assembly, homodimer. Heterotetramer of two MnmE and two MnmG subunits. It depends on K(+) as a cofactor.

It localises to the cytoplasm. Its function is as follows. Exhibits a very high intrinsic GTPase hydrolysis rate. Involved in the addition of a carboxymethylaminomethyl (cmnm) group at the wobble position (U34) of certain tRNAs, forming tRNA-cmnm(5)s(2)U34. The polypeptide is tRNA modification GTPase MnmE (Bordetella parapertussis (strain 12822 / ATCC BAA-587 / NCTC 13253)).